A 476-amino-acid chain; its full sequence is ATP synthase subunit beta (476 aa).

158-165 (GGAGVGKT) contributes to the ATP binding site.

It belongs to the ATPase alpha/beta chains family. F-type ATPases have 2 components, CF(1) - the catalytic core - and CF(0) - the membrane proton channel. CF(1) has five subunits: alpha(3), beta(3), gamma(1), delta(1), epsilon(1). CF(0) has three main subunits: a(1), b(2) and c(9-12). The alpha and beta chains form an alternating ring which encloses part of the gamma chain. CF(1) is attached to CF(0) by a central stalk formed by the gamma and epsilon chains, while a peripheral stalk is formed by the delta and b chains.

The protein resides in the cell inner membrane. It carries out the reaction ATP + H2O + 4 H(+)(in) = ADP + phosphate + 5 H(+)(out). Produces ATP from ADP in the presence of a proton gradient across the membrane. The catalytic sites are hosted primarily by the beta subunits. This Paracidovorax citrulli (strain AAC00-1) (Acidovorax citrulli) protein is ATP synthase subunit beta.